Here is a 227-residue protein sequence, read N- to C-terminus: Large ribosomal subunit protein uL10c (227 aa).

The transit peptide at 1–47 (MEATFFTLPSSTSHSYPFSLKSHFNNSLTLPTHPHFKPKSKNLTIRS) directs the protein to the chloroplast.

Belongs to the universal ribosomal protein uL10 family. Part of the 50S ribosomal subunit.

Its subcellular location is the plastid. It is found in the chloroplast. In terms of biological role, this protein binds directly to 23S ribosomal RNA. The protein is Large ribosomal subunit protein uL10c (RPL10) of Nicotiana tabacum (Common tobacco).